A 410-amino-acid polypeptide reads, in one-letter code: Cytochrome P450 monooxygenase mpsF (410 aa).

Position 355 (Cys-355) interacts with heme.

This sequence belongs to the cytochrome P450 family. Heme serves as cofactor.

The protein operates within secondary metabolite biosynthesis. In terms of biological role, cytochrome P450 monooxygenase; part of the gene cluster that mediates the biosynthesis of macrophasetins, 3-decalinoyltetramic acids (DTAs) which feature a tetramate (pyrrolidine-2,4-dione) unit connected to a decalin fragment and that have potent bioactivities. The PKS-NRPS mpsA together with its associated enoylreductase partner mpsG incorporate one unit of acetyl-CoA, seven units of malonyl-CoA, and one unit of L-alanine to assemble the linear tetramic acid intermediate corresponding to the backbone of macrophasetins. Without the Diels-Alderase mpsD, the mpsA/G product can undergo the non-enzymatic intramolecular Diels-Alder (IMDA) reaction to generate both macrophasetin A and macrophasetin B. Catalyzed by mpsD, the linear tetramic acid intermediate is thoroughly converted to macrophasetin A via the endo-IMDA reaction in a regioselective and stereoselective manner. Finally, the cytochrome P450 monooxygenase mpsF catalyzes the hydroxylation at C20 to yield the end product macrophasetin C. The chain is Cytochrome P450 monooxygenase mpsF from Macrophomina phaseolina (strain MS6) (Charcoal rot fungus).